The following is a 333-amino-acid chain: Protein pelota homolog (333 aa).

It belongs to the eukaryotic release factor 1 family. Pelota subfamily. As to quaternary structure, monomer. The cofactor is a divalent metal cation.

Its subcellular location is the cytoplasm. Its function is as follows. May function in recognizing stalled ribosomes, interact with stem-loop structures in stalled mRNA molecules, and effect endonucleolytic cleavage of the mRNA. May play a role in the release non-functional ribosomes and degradation of damaged mRNAs. Has endoribonuclease activity. The chain is Protein pelota homolog from Pyrobaculum arsenaticum (strain DSM 13514 / JCM 11321 / PZ6).